A 410-amino-acid polypeptide reads, in one-letter code: Platelet-activating factor acetylhydrolase IB subunit alpha (410 aa).

Residues methionine 1–aspartate 38 are required for self-association and interaction with PAFAH1B2 and PAFAH1B3. The tract at residues methionine 1 to methionine 66 is interaction with NDE1. The interval methionine 1 to tyrosine 102 is interaction with NDEL1. The LisH domain maps to glutamine 7–methionine 39. The residue at position 53 (lysine 53) is an N6-acetyllysine. The stretch at threonine 56–glycine 82 forms a coiled coil. The interval glycine 83–arginine 410 is interaction with dynein and dynactin. WD repeat units follow at residues glycine 106–lysine 147, glycine 148–threonine 187, glycine 190–threonine 229, glycine 232–glutamate 271, glutamate 274–threonine 333, glycine 336–asparagine 377, and histidine 379–arginine 410. Serine 109 bears the Phosphoserine mark. An interaction with DCX region spans residues tyrosine 367–cysteine 409. An interaction with NDEL1 region spans residues phenylalanine 388–arginine 410.

The protein belongs to the WD repeat LIS1/nudF family. In terms of assembly, can self-associate. Component of the cytosolic PAF-AH (I) heterotetrameric enzyme, which is composed of PAFAH1B1 (beta), PAFAH1B2 (alpha2) and PAFAH1B3 (alpha1) subunits. The catalytic activity of the enzyme resides in the alpha1 (PAFAH1B3) and alpha2 (PAFAH1B2) subunits, whereas the beta subunit (PAFAH1B1) has regulatory activity. Trimer formation is not essential for the catalytic activity. Interacts with the catalytic dimer of PAF-AH (I) heterotetrameric enzyme: interacts with PAFAH1B2 homodimer (alpha2/alpha2 homodimer), PAFAH1B3 homodimer (alpha1/alpha1 homodimer) and PAFAH1B2-PAFAH1B3 heterodimer (alpha2/alpha1 heterodimer). Interacts with DCX, dynein, dynactin, IQGAP1, KATNB1, NDE1, NDEL1, NUDC and RSN. Interacts with DISC1, and this interaction is enhanced by NDEL1. Interacts with DAB1 when DAB1 is phosphorylated in response to RELN/reelin signaling. Interacts with INTS13. Interacts with DCDC1.

Its subcellular location is the cytoplasm. It is found in the cytoskeleton. It localises to the microtubule organizing center. The protein resides in the centrosome. The protein localises to the spindle. Its subcellular location is the nucleus membrane. Its function is as follows. Regulatory subunit (beta subunit) of the cytosolic type I platelet-activating factor (PAF) acetylhydrolase (PAF-AH (I)), an enzyme that catalyzes the hydrolyze of the acetyl group at the sn-2 position of PAF and its analogs and participates in PAF inactivation. Regulates the PAF-AH (I) activity in a catalytic dimer composition-dependent manner. Positively regulates the activity of the minus-end directed microtubule motor protein dynein. May enhance dynein-mediated microtubule sliding by targeting dynein to the microtubule plus end. Required for several dynein- and microtubule-dependent processes such as the maintenance of Golgi integrity, the peripheral transport of microtubule fragments and the coupling of the nucleus and centrosome. Required during brain development for the proliferation of neuronal precursors and the migration of newly formed neurons from the ventricular/subventricular zone toward the cortical plate. Neuronal migration involves a process called nucleokinesis, whereby migrating cells extend an anterior process into which the nucleus subsequently translocates. During nucleokinesis dynein at the nuclear surface may translocate the nucleus towards the centrosome by exerting force on centrosomal microtubules. Also required for proper activation of Rho GTPases and actin polymerization at the leading edge of locomoting cerebellar neurons and postmigratory hippocampal neurons in response to calcium influx triggered via NMDA receptors. May also play a role in other forms of cell locomotion including the migration of fibroblasts during wound healing. Required for dynein recruitment to microtubule plus ends and BICD2-bound cargos. May modulate the Reelin pathway through interaction of the PAF-AH (I) catalytic dimer with VLDLR. This is Platelet-activating factor acetylhydrolase IB subunit alpha from Pan troglodytes (Chimpanzee).